The sequence spans 327 residues: Peroxidase 21 (327 aa).

Residues 1 to 28 (MANAKPFCLLGFFCLLLQLFSIFHIGNG) form the signal peptide. 4 disulfide bridges follow: cysteine 39-cysteine 118, cysteine 72-cysteine 77, cysteine 124-cysteine 323, and cysteine 204-cysteine 231. Histidine 70 (proton acceptor) is an active-site residue. Residues aspartate 71, valine 74, aspartate 78, and serine 80 each contribute to the Ca(2+) site. Proline 167 contacts substrate. Asparagine 170 carries an N-linked (GlcNAc...) asparagine glycan. Histidine 197 is a binding site for heme b. Residue serine 198 participates in Ca(2+) binding. Ca(2+)-binding residues include aspartate 247, threonine 250, and aspartate 255.

The protein belongs to the peroxidase family. Classical plant (class III) peroxidase subfamily. Heme b is required as a cofactor. Ca(2+) serves as cofactor. Preferentially expressed in roots and leaves, slightly in stems.

The catalysed reaction is 2 a phenolic donor + H2O2 = 2 a phenolic radical donor + 2 H2O. Removal of H(2)O(2), oxidation of toxic reductants, biosynthesis and degradation of lignin, suberization, auxin catabolism, response to environmental stresses such as wounding, pathogen attack and oxidative stress. These functions might be dependent on each isozyme/isoform in each plant tissue. Functionally, might function as heat shock-like defense protein. May be implicated in the systemic acquired resistance response. The polypeptide is Peroxidase 21 (PER21) (Arabidopsis thaliana (Mouse-ear cress)).